A 517-amino-acid polypeptide reads, in one-letter code: Maturase K (517 aa).

The protein belongs to the intron maturase 2 family. MatK subfamily.

It localises to the plastid. The protein resides in the chloroplast. Its function is as follows. Usually encoded in the trnK tRNA gene intron. Probably assists in splicing its own and other chloroplast group II introns. The chain is Maturase K from Trillium maculatum (Spotted wakerobin).